A 103-amino-acid polypeptide reads, in one-letter code: Cycloviolacin-O9 (103 aa).

Positions 1-9 (AAFALPAFA) are cleaved as a signal peptide. The propeptide occupies 10–69 (SFEKDVITPAALEAVLNRKAPLYNIMMENDAILNVIANVKTVISNPVLEEALLKTNHGVN). A cross-link (cyclopeptide (Gly-Asn)) is located at residues 70-99 (GIPCGESCVWIPCLTSAVGCSCKSKVCYRN). 3 disulfide bridges follow: C73-C89, C77-C91, and C82-C96. Residues 100-103 (SLDN) constitute a propeptide that is removed on maturation.

Post-translationally, this is a cyclic peptide.

In terms of biological role, probably participates in a plant defense mechanism. The sequence is that of Cycloviolacin-O9 from Viola biflora (Yellow wood violet).